Here is a 475-residue protein sequence, read N- to C-terminus: Putative aldehyde dehydrogenase SH0913 (475 aa).

201 to 207 contributes to the NAD(+) binding site; the sequence is GDGEGVG. Active-site residues include E245 and C279.

Belongs to the aldehyde dehydrogenase family.

It catalyses the reaction an aldehyde + NAD(+) + H2O = a carboxylate + NADH + 2 H(+). The polypeptide is Putative aldehyde dehydrogenase SH0913 (Staphylococcus haemolyticus (strain JCSC1435)).